We begin with the raw amino-acid sequence, 200 residues long: Probable DNA-directed RNA polymerase subunit delta (200 aa).

Positions 19–88 (LSMIEVARAI…GDNKWGLRSW (70 aa)) constitute an HTH HARE-type domain. Acidic residues-rich tracts occupy residues 125–143 (DSDA…DAYE) and 150–200 (YDDE…TSEE). A disordered region spans residues 125 to 200 (DSDAIDYNAD…SDDDAETSEE (76 aa)).

It belongs to the RpoE family. RNAP is composed of a core of 2 alpha, a beta and a beta' subunits. The core is associated with a delta subunit and one of several sigma factors.

Its function is as follows. Participates in both the initiation and recycling phases of transcription. In the presence of the delta subunit, RNAP displays an increased specificity of transcription, a decreased affinity for nucleic acids, and an increased efficiency of RNA synthesis because of enhanced recycling. This Streptococcus pneumoniae serotype 4 (strain ATCC BAA-334 / TIGR4) protein is Probable DNA-directed RNA polymerase subunit delta.